The following is a 283-amino-acid chain: Glutamate racemase (283 aa).

Substrate contacts are provided by residues 13 to 14 (DS) and 45 to 46 (YG). Cys-76 functions as the Proton donor/acceptor in the catalytic mechanism. Residue 77 to 78 (NT) participates in substrate binding. The Proton donor/acceptor role is filled by Cys-186. 187–188 (TH) is a binding site for substrate.

The protein belongs to the aspartate/glutamate racemases family.

The enzyme catalyses L-glutamate = D-glutamate. It functions in the pathway cell wall biogenesis; peptidoglycan biosynthesis. Functionally, provides the (R)-glutamate required for cell wall biosynthesis. This is Glutamate racemase from Microcystis aeruginosa (strain NIES-843 / IAM M-2473).